Consider the following 377-residue polypeptide: Putative glutamate--cysteine ligase 2 (377 aa).

It belongs to the glutamate--cysteine ligase type 2 family. YbdK subfamily.

The catalysed reaction is L-cysteine + L-glutamate + ATP = gamma-L-glutamyl-L-cysteine + ADP + phosphate + H(+). In terms of biological role, ATP-dependent carboxylate-amine ligase which exhibits weak glutamate--cysteine ligase activity. The sequence is that of Putative glutamate--cysteine ligase 2 from Chromobacterium violaceum (strain ATCC 12472 / DSM 30191 / JCM 1249 / CCUG 213 / NBRC 12614 / NCIMB 9131 / NCTC 9757 / MK).